The primary structure comprises 384 residues: Methylthioribose-1-phosphate isomerase (384 aa).

Aspartate 255 serves as the catalytic Proton donor.

This sequence belongs to the eIF-2B alpha/beta/delta subunits family. MtnA subfamily.

It is found in the cytoplasm. It localises to the nucleus. It catalyses the reaction 5-(methylsulfanyl)-alpha-D-ribose 1-phosphate = 5-(methylsulfanyl)-D-ribulose 1-phosphate. It participates in amino-acid biosynthesis; L-methionine biosynthesis via salvage pathway; L-methionine from S-methyl-5-thio-alpha-D-ribose 1-phosphate: step 1/6. Catalyzes the interconversion of methylthioribose-1-phosphate (MTR-1-P) into methylthioribulose-1-phosphate (MTRu-1-P). This Talaromyces stipitatus (strain ATCC 10500 / CBS 375.48 / QM 6759 / NRRL 1006) (Penicillium stipitatum) protein is Methylthioribose-1-phosphate isomerase (mri1).